Reading from the N-terminus, the 634-residue chain is 1-phosphatidylinositol 4,5-bisphosphate phosphodiesterase zeta-1 (634 aa).

An EF-hand domain is found at 35-70 (CNTIHVKYIFKDNDRLKQGRITIEEFRTIYRIITYR). One can recognise a PI-PLC X-box domain in the interval 155 to 299 (QDMTHPLTDY…LKFKILVRNK (145 aa)). Residues histidine 170 and histidine 215 contribute to the active site. The tract at residues 312–345 (GSDMHGKVEEFEEEEEIEQEEDGSGAKEPEPVGD) is disordered. The segment covering 321–334 (EFEEEEEIEQEEDG) has biased composition (acidic residues). A PI-PLC Y-box domain is found at 376 to 492 (LSDLVIYTKV…GYVLKPRFLR (117 aa)). The 124-residue stretch at 492–615 (RDKKTKFNPH…RGYRRVPLFS (124 aa)) folds into the C2 domain.

In terms of assembly, interacts (via its C2 domain) with PtdIns(3)P and, to a lesser extent, PtdIns(5)P in vitro. Ca(2+) serves as cofactor.

Its subcellular location is the nucleus. The protein resides in the cytoplasm. It is found in the perinuclear region. The catalysed reaction is a 1,2-diacyl-sn-glycero-3-phospho-(1D-myo-inositol-4,5-bisphosphate) + H2O = 1D-myo-inositol 1,4,5-trisphosphate + a 1,2-diacyl-sn-glycerol + H(+). Its function is as follows. The production of the second messenger molecules diacylglycerol (DAG) and inositol 1,4,5-trisphosphate (IP3) is mediated by activated phosphatidylinositol-specific phospholipase C enzymes. In vitro, hydrolyzes PtdIns(4,5)P2 in a Ca(2+)-dependent manner. Triggers intracellular Ca(2+) oscillations in oocytes solely during M phase and is involved in inducing oocyte activation and initiating embryonic development up to the blastocyst stage. Is therefore a strong candidate for the egg-activating soluble sperm factor that is transferred from the sperm into the egg cytoplasm following gamete membrane fusion. May exert an inhibitory effect on phospholipase-C-coupled processes that depend on calcium ions and protein kinase C, including CFTR trafficking and function. The chain is 1-phosphatidylinositol 4,5-bisphosphate phosphodiesterase zeta-1 from Bos taurus (Bovine).